A 146-amino-acid chain; its full sequence is Snake venom vascular endothelial growth factor toxin (146 aa).

A signal peptide spans 1 to 24 (MAAYLLAVAILFCIQGWPLGTVQG). The residue at position 25 (glutamine 25) is a Pyrrolidone carboxylic acid. 3 disulfide bridges follow: cysteine 38–cysteine 80, cysteine 69–cysteine 115, and cysteine 73–cysteine 117. The tract at residues 119–146 (PRSASGVNSRKHKRNPEEGEPRAKFPFV) is disordered. Basic and acidic residues predominate over residues 133 to 146 (NPEEGEPRAKFPFV).

Belongs to the PDGF/VEGF growth factor family. Snake venom VEGF subfamily. Homodimer; disulfide-linked. Interacts with VEGF receptor-1 (FLT1) with a high affinity, whereas it binds to VEGF receptor-2 (KDR) with a low affinity. Does not bind VEGF receptor-3 (FLT4). As to expression, expressed by the venom gland.

The protein resides in the secreted. Functionally, snake venom VEGFs may contribute to venom dispersion and prey subjugation by inducing vascular permeability and hypotension. This protein induces vascular permeability probably through VEGF (VEGFR) signaling. This protein also induces a drastic hypotensive effect after intravenous injection. The hypotension is mediated by nitric oxide (NO), which is produced by VEGF-activated endothelium NO synthase. Also induces angiogenesis in vitro. Like other crotalid VEGFs, this protein interacts with VEGF receptor-1 (FLT1) with a high affinity, whereas it binds to VEGF receptor-2 (KDR) with a low affinity. The protein is Snake venom vascular endothelial growth factor toxin of Bothrops insularis (Golden lancehead).